Consider the following 399-residue polypeptide: Trimethyllysine dioxygenase (399 aa).

3 residues coordinate Fe cation: H214, D216, and H360.

The protein belongs to the gamma-BBH/TMLD family. It depends on Fe(2+) as a cofactor. Requires L-ascorbate as cofactor.

It localises to the cytoplasm. It carries out the reaction N(6),N(6),N(6)-trimethyl-L-lysine + 2-oxoglutarate + O2 = (3S)-3-hydroxy-N(6),N(6),N(6)-trimethyl-L-lysine + succinate + CO2. The protein operates within amine and polyamine biosynthesis; carnitine biosynthesis. Functionally, converts trimethyllysine (TML) into hydroxytrimethyllysine (HTML). This is Trimethyllysine dioxygenase from Meyerozyma guilliermondii (strain ATCC 6260 / CBS 566 / DSM 6381 / JCM 1539 / NBRC 10279 / NRRL Y-324) (Yeast).